A 362-amino-acid chain; its full sequence is Phosphoserine aminotransferase (362 aa).

R42 provides a ligand contact to L-glutamate. W102, T154, D174, and Q197 together coordinate pyridoxal 5'-phosphate. K198 is subject to N6-(pyridoxal phosphate)lysine. A pyridoxal 5'-phosphate-binding site is contributed by 239–240 (NT).

This sequence belongs to the class-V pyridoxal-phosphate-dependent aminotransferase family. SerC subfamily. Homodimer. Pyridoxal 5'-phosphate is required as a cofactor.

The protein localises to the cytoplasm. It catalyses the reaction O-phospho-L-serine + 2-oxoglutarate = 3-phosphooxypyruvate + L-glutamate. It carries out the reaction 4-(phosphooxy)-L-threonine + 2-oxoglutarate = (R)-3-hydroxy-2-oxo-4-phosphooxybutanoate + L-glutamate. It participates in amino-acid biosynthesis; L-serine biosynthesis; L-serine from 3-phospho-D-glycerate: step 2/3. Its pathway is cofactor biosynthesis; pyridoxine 5'-phosphate biosynthesis; pyridoxine 5'-phosphate from D-erythrose 4-phosphate: step 3/5. Catalyzes the reversible conversion of 3-phosphohydroxypyruvate to phosphoserine and of 3-hydroxy-2-oxo-4-phosphonooxybutanoate to phosphohydroxythreonine. The protein is Phosphoserine aminotransferase of Haemophilus ducreyi (strain 35000HP / ATCC 700724).